A 472-amino-acid polypeptide reads, in one-letter code: NALCN channel auxiliary factor 2 (472 aa).

Residues L47–A67 form a helical membrane-spanning segment. Residues A77–C114 are disordered. A compositionally biased stretch (pro residues) spans P90–P110. N-linked (GlcNAc...) asparagine glycosylation is found at N120 and N193. A helical membrane pass occupies residues L433–G453.

Belongs to the NALF family.

The protein resides in the membrane. Its function is as follows. Probable component of the NALCN channel complex, a channel that regulates the resting membrane potential and controls neuronal excitability. The protein is NALCN channel auxiliary factor 2 of Homo sapiens (Human).